The primary structure comprises 271 residues: Troponin T, fast skeletal muscle (271 aa).

Residues 1–21 (MSDEEVEHVEEEYEEEEEAQE) are compositionally biased toward acidic residues. Positions 1-74 (MSDEEVEHVE…EKVDFDDIQK (74 aa)) are disordered. At serine 2 the chain carries N-acetylserine. Serine 2 is subject to Phosphoserine. 2 stretches are compositionally biased toward basic and acidic residues: residues 31–53 (PEVH…EKPR) and 62–74 (PEGE…DIQK). Serine 90 is modified (phosphoserine). The span at 113–155 (RAERAEQQRIRAEKERERQNRLAEEKARREEEDAKRRAEDDLK) shows a compositional bias: basic and acidic residues. A disordered region spans residues 113 to 194 (RAERAEQQRI…REMKKKVLAE (82 aa)). Residues serine 161, serine 168, and serine 169 each carry the phosphoserine modification. The segment covering 183 to 194 (TAREMKKKVLAE) has biased composition (basic and acidic residues). A Phosphoserine modification is found at serine 205. Tyrosine 221 is subject to Phosphotyrosine. The tract at residues 248–271 (IDQAQKHSKKAGTAPKGKVGGRWK) is disordered.

It belongs to the troponin T family.

Its function is as follows. Troponin T is the tropomyosin-binding subunit of troponin, the thin filament regulatory complex which confers calcium-sensitivity to striated muscle actomyosin ATPase activity. This Bos taurus (Bovine) protein is Troponin T, fast skeletal muscle (Tnnt3).